Here is a 159-residue protein sequence, read N- to C-terminus: SsrA-binding protein (159 aa).

This sequence belongs to the SmpB family.

Its subcellular location is the cytoplasm. Its function is as follows. Required for rescue of stalled ribosomes mediated by trans-translation. Binds to transfer-messenger RNA (tmRNA), required for stable association of tmRNA with ribosomes. tmRNA and SmpB together mimic tRNA shape, replacing the anticodon stem-loop with SmpB. tmRNA is encoded by the ssrA gene; the 2 termini fold to resemble tRNA(Ala) and it encodes a 'tag peptide', a short internal open reading frame. During trans-translation Ala-aminoacylated tmRNA acts like a tRNA, entering the A-site of stalled ribosomes, displacing the stalled mRNA. The ribosome then switches to translate the ORF on the tmRNA; the nascent peptide is terminated with the 'tag peptide' encoded by the tmRNA and targeted for degradation. The ribosome is freed to recommence translation, which seems to be the essential function of trans-translation. In Frankia casuarinae (strain DSM 45818 / CECT 9043 / HFP020203 / CcI3), this protein is SsrA-binding protein.